Consider the following 88-residue polypeptide: Small ribosomal subunit protein uS19 (88 aa).

It belongs to the universal ribosomal protein uS19 family.

Functionally, protein S19 forms a complex with S13 that binds strongly to the 16S ribosomal RNA. The sequence is that of Small ribosomal subunit protein uS19 from Chlamydia felis (strain Fe/C-56) (Chlamydophila felis).